The primary structure comprises 348 residues: Putative [LysW]-L-2-aminoadipate/[LysW]-L-glutamate phosphate reductase (348 aa).

9–12 (SGYV) lines the NADP(+) pocket. Cysteine 149 is a catalytic residue. Asparagine 315 is a binding site for NADP(+).

The protein belongs to the NAGSA dehydrogenase family. Type 1 subfamily. LysY sub-subfamily.

The protein resides in the cytoplasm. It carries out the reaction [amino-group carrier protein]-C-terminal-N-(1-carboxy-5-oxopentan-1-yl)-L-glutamine + phosphate + NADP(+) = [amino-group carrier protein]-C-terminal-N-(1-carboxy-5-phosphooxy-5-oxopentan-1-yl)-L-glutamine + NADPH + H(+). It catalyses the reaction [amino-group carrier protein]-C-terminal-gamma-(L-glutamyl-5-semialdehyde)-L-glutamate + phosphate + NADP(+) = [amino-group carrier protein]-C-terminal-gamma-(5-phospho-L-glutamyl)-L-glutamate + NADPH + H(+). It functions in the pathway amino-acid biosynthesis; L-lysine biosynthesis via AAA pathway; L-lysine from L-alpha-aminoadipate (Thermus route): step 3/5. The protein operates within amino-acid biosynthesis; L-arginine biosynthesis. Its function is as follows. Involved in both the arginine and lysine biosynthetic pathways. The protein is Putative [LysW]-L-2-aminoadipate/[LysW]-L-glutamate phosphate reductase of Cenarchaeum symbiosum (strain A).